The sequence spans 476 residues: Glutathione synthetase (476 aa).

Position 117 (Arg117) interacts with substrate. Glu137 contributes to the ATP binding site. Glu137 and Asn139 together coordinate Mg(2+). Residues 141–144 (ISSS), 211–213 (ERN), Gln217, and 267–270 (RAGY) contribute to the substrate site. ATP is bound by residues Lys308, 367–376 (KPQREGGGNN), Tyr378, 400–403 (MDKI), and Glu426. Glu371 lines the Mg(2+) pocket. Position 452 (Arg452) interacts with substrate. Residues Lys454 and Glu460 each coordinate ATP. Residue 463 to 464 (VA) participates in substrate binding.

It belongs to the eukaryotic GSH synthase family. Homodimer. Requires Mg(2+) as cofactor.

The catalysed reaction is gamma-L-glutamyl-L-cysteine + glycine + ATP = glutathione + ADP + phosphate + H(+). It participates in sulfur metabolism; glutathione biosynthesis; glutathione from L-cysteine and L-glutamate: step 2/2. This is Glutathione synthetase (gshB) from Dictyostelium discoideum (Social amoeba).